The primary structure comprises 249 residues: Zinc finger protein mnm-2 (249 aa).

The interval 20–65 (PKEELETEEEDEEEDEEEELSSSEVTSENDMETESASSSASSVGQP) is disordered. Acidic residues predominate over residues 24-52 (LETEEEDEEEDEEEELSSSEVTSENDMET). 3 consecutive C2H2-type zinc fingers follow at residues 168–190 (YRCD…KRIH), 196–218 (FKCE…RLTH), and 224–246 (YVCG…MRTH).

As to expression, in larva and adult, expressed in the M3 pharyngeal motor neurons, extrapharyngeal neurons in the head, the PQR tail neurons, rectal cells, vulva cells, the spermetheca-uterine valve, body wall muscle cells and neurons of the ventral nerve cord. In the embryo, expressed in pharyngeal cells, extrapharyngeal head neurons and within the tail. Expressed in body wall muscle cells during late embryonic stages. Expressed in the mother cells of the M2 and M3 pharyngeal motor neurons precursor cells at the embryonic bean stage and subsequently in the M2 and M3 cells as they are born. Expression is sustained only in the two M3 cells up to at least the 5-day-old adult. In contrast, expression gradually declines in the M2 cells beginning from the time of their birth, and is completely undetectable by the time of hatching.

Its subcellular location is the nucleus. In terms of biological role, required in the M3 pharyngeal motor neuron to guide the growth cone of the sister M2 motor neuron during axon development. The chain is Zinc finger protein mnm-2 from Caenorhabditis elegans.